Reading from the N-terminus, the 320-residue chain is Aspartate carbamoyltransferase catalytic subunit (320 aa).

Carbamoyl phosphate is bound by residues Arg-53 and Thr-54. Lys-82 is an L-aspartate binding site. Carbamoyl phosphate contacts are provided by Arg-103, His-131, and Gln-134. Arg-164 and Arg-227 together coordinate L-aspartate. Carbamoyl phosphate-binding residues include Leu-266 and Pro-267.

The protein belongs to the aspartate/ornithine carbamoyltransferase superfamily. ATCase family. Heterododecamer (2C3:3R2) of six catalytic PyrB chains organized as two trimers (C3), and six regulatory PyrI chains organized as three dimers (R2).

It carries out the reaction carbamoyl phosphate + L-aspartate = N-carbamoyl-L-aspartate + phosphate + H(+). The protein operates within pyrimidine metabolism; UMP biosynthesis via de novo pathway; (S)-dihydroorotate from bicarbonate: step 2/3. In terms of biological role, catalyzes the condensation of carbamoyl phosphate and aspartate to form carbamoyl aspartate and inorganic phosphate, the committed step in the de novo pyrimidine nucleotide biosynthesis pathway. The protein is Aspartate carbamoyltransferase catalytic subunit of Bifidobacterium longum subsp. infantis (strain ATCC 15697 / DSM 20088 / JCM 1222 / NCTC 11817 / S12).